A 379-amino-acid chain; its full sequence is Acetylajmalan esterase 1 (379 aa).

Residues 1–20 form the signal peptide; it reads MGFAPLLVFSLFVFAGTTKG. The active-site Nucleophile is S34. Residues N96, N178, N197, and N291 are each glycosylated (N-linked (GlcNAc...) asparagine). Active-site residues include D332 and H335.

Belongs to the 'GDSL' lipolytic enzyme family. As to expression, expressed in roots and leaves at low levels.

The enzyme catalyses 17-O-acetylnorajmaline + H2O = norajmaline + acetate + H(+). It catalyses the reaction 17-O-acetylajmaline + H2O = ajmaline + acetate + H(+). It functions in the pathway alkaloid biosynthesis; ajmaline biosynthesis. Functionally, acetylesterase involved in the biosynthesis of ajmaline-type monoterpenoid indole alkaloids (MIAs) natural products, important plant-derived pharmaceuticals used in the therapy of heart disorders. Deacetylates 17-O-acetylnorajmaline to produce norajmaline. May also catalyze the conversion of 17-O-acetylajmaline to ajmaline. This chain is Acetylajmalan esterase 1, found in Rauvolfia serpentina (Serpentine wood).